Here is a 397-residue protein sequence, read N- to C-terminus: NADH-quinone oxidoreductase subunit D (397 aa).

This sequence belongs to the complex I 49 kDa subunit family. As to quaternary structure, NDH-1 is composed of 14 different subunits. Subunits NuoB, C, D, E, F, and G constitute the peripheral sector of the complex.

Its subcellular location is the cell inner membrane. It carries out the reaction a quinone + NADH + 5 H(+)(in) = a quinol + NAD(+) + 4 H(+)(out). NDH-1 shuttles electrons from NADH, via FMN and iron-sulfur (Fe-S) centers, to quinones in the respiratory chain. The immediate electron acceptor for the enzyme in this species is believed to be ubiquinone. Couples the redox reaction to proton translocation (for every two electrons transferred, four hydrogen ions are translocated across the cytoplasmic membrane), and thus conserves the redox energy in a proton gradient. This is NADH-quinone oxidoreductase subunit D from Magnetococcus marinus (strain ATCC BAA-1437 / JCM 17883 / MC-1).